A 387-amino-acid chain; its full sequence is Cytochrome b (387 aa).

4 helical membrane passes run 32–52, 76–98, 113–133, and 179–199; these read FGSL…LLAC, FLLR…LHIG, TWNI…LGYC, and FFSL…MHLI. Heme b contacts are provided by His-82 and His-96. His-183 and His-197 together coordinate heme b. Residue His-202 participates in a ubiquinone binding. Helical transmembrane passes span 225 to 245, 289 to 309, 321 to 341, and 348 to 368; these read YLIK…YMAF, QLGV…PLLD, FGKF…WIGG, and FITI…ILIP.

Belongs to the cytochrome b family. Fungal cytochrome b-c1 complex contains 10 subunits; 3 respiratory subunits, 2 core proteins and 5 low-molecular weight proteins. Cytochrome b-c1 complex is a homodimer. The cofactor is heme b.

The protein localises to the mitochondrion inner membrane. Its function is as follows. Component of the ubiquinol-cytochrome c reductase complex (complex III or cytochrome b-c1 complex) that is part of the mitochondrial respiratory chain. The b-c1 complex mediates electron transfer from ubiquinol to cytochrome c. Contributes to the generation of a proton gradient across the mitochondrial membrane that is then used for ATP synthesis. This Schizosaccharomyces pombe (strain 972 / ATCC 24843) (Fission yeast) protein is Cytochrome b (cob).